We begin with the raw amino-acid sequence, 284 residues long: Bifunctional protein FolD (284 aa).

Residues 166 to 168 (GAS) and isoleucine 232 each bind NADP(+).

Belongs to the tetrahydrofolate dehydrogenase/cyclohydrolase family. In terms of assembly, homodimer.

It catalyses the reaction (6R)-5,10-methylene-5,6,7,8-tetrahydrofolate + NADP(+) = (6R)-5,10-methenyltetrahydrofolate + NADPH. It carries out the reaction (6R)-5,10-methenyltetrahydrofolate + H2O = (6R)-10-formyltetrahydrofolate + H(+). The protein operates within one-carbon metabolism; tetrahydrofolate interconversion. In terms of biological role, catalyzes the oxidation of 5,10-methylenetetrahydrofolate to 5,10-methenyltetrahydrofolate and then the hydrolysis of 5,10-methenyltetrahydrofolate to 10-formyltetrahydrofolate. The protein is Bifunctional protein FolD of Alteromonas mediterranea (strain DSM 17117 / CIP 110805 / LMG 28347 / Deep ecotype).